A 102-amino-acid polypeptide reads, in one-letter code: Turripeptide OL55-like (102 aa).

Contains 8 disulfide bonds. As to expression, expressed by the venom duct.

Its subcellular location is the secreted. Its function is as follows. Acts as a neurotoxin by inhibiting an ion channel. The chain is Turripeptide OL55-like from Lophiotoma acuta (Marbled turris).